The chain runs to 500 residues: Glutelin type-B 5 (500 aa).

The N-terminal stretch at 1–24 (MATIAFSRLSIYFCVLLLCHGSMA) is a signal peptide. 2 disulfides stabilise this stretch: Cys45–Cys78 and Cys121–Cys310. 2 consecutive Cupin type-1 domains span residues 50 to 245 (LQAF…LVAK) and 316 to 465 (LNIE…EQAR).

It belongs to the 11S seed storage protein (globulins) family. In terms of assembly, hexamer; each subunit is composed of an acidic and a basic chain derived from a single precursor and linked by a disulfide bond.

Its function is as follows. Seed storage protein. The polypeptide is Glutelin type-B 5 (GLUB5) (Oryza sativa subsp. japonica (Rice)).